Reading from the N-terminus, the 233-residue chain is Small ribosomal subunit protein uS3 (233 aa).

Residues E28 to G96 enclose the KH type-2 domain.

This sequence belongs to the universal ribosomal protein uS3 family. Part of the 30S ribosomal subunit. Forms a tight complex with proteins S10 and S14.

Binds the lower part of the 30S subunit head. Binds mRNA in the 70S ribosome, positioning it for translation. The protein is Small ribosomal subunit protein uS3 of Shigella flexneri.